The primary structure comprises 472 residues: Adenosylhomocysteinase (472 aa).

Substrate contacts are provided by Thr62, Asp137, and Glu197. NAD(+) is bound at residue 198–200 (TTT). Positions 227 and 231 each coordinate substrate. NAD(+)-binding positions include Asn232, 261–266 (GYGDVG), Glu284, Asn319, 340–342 (IGH), and Asn385.

The protein belongs to the adenosylhomocysteinase family. Requires NAD(+) as cofactor.

Its subcellular location is the cytoplasm. It carries out the reaction S-adenosyl-L-homocysteine + H2O = L-homocysteine + adenosine. Its pathway is amino-acid biosynthesis; L-homocysteine biosynthesis; L-homocysteine from S-adenosyl-L-homocysteine: step 1/1. Functionally, may play a key role in the regulation of the intracellular concentration of adenosylhomocysteine. This is Adenosylhomocysteinase from Bordetella petrii (strain ATCC BAA-461 / DSM 12804 / CCUG 43448).